The sequence spans 748 residues: Pentatricopeptide repeat-containing protein At3g13880 (748 aa).

PPR repeat units follow at residues 46-80 (DSEG…SLNP), 81-111 (CLYL…MPER), 112-146 (NIIS…NLKL), 147-181 (DKFT…GLSQ), 182-212 (QVFL…CDER), 213-247 (DQVS…GLNL), 248-285 (TTYA…GMEF), 286-316 (DIVV…MPSK), 317-356 (NVVT…GLEP), 357-391 (SPST…NFQS), 392-422 (DEFI…TSKQ), 423-457 (DIAS…HIRP), 458-492 (EEYT…GIDA), 493-523 (FTSV…VQNP), 524-558 (DVAT…GIKP), 559-589 (NQQA…MKND), and 595-629 (NEKH…DHPV). The type E motif stretch occupies residues 630 to 705 (TWRALLSSCR…EPALSWIVIG (76 aa)). The segment at 706 to 736 (NQTHSFAVADLSHPSSQMIYTMLETMDNVDF) is type E(+) motif.

The protein belongs to the PPR family. PCMP-E subfamily.

The polypeptide is Pentatricopeptide repeat-containing protein At3g13880 (PCMP-E89) (Arabidopsis thaliana (Mouse-ear cress)).